Reading from the N-terminus, the 334-residue chain is Non-functional pseudokinase ZED1 (334 aa).

One can recognise a Protein kinase domain in the interval 49-334 (FSESRIISSW…KELKLIEKLS (286 aa)). ATP contacts are provided by residues 55 to 63 (ISSWGYFIW) and lysine 76. O-acetylthreonine occurs at positions 125 and 177.

It belongs to the protein kinase superfamily. Ser/Thr protein kinase family. ZRK subfamily. As to quaternary structure, interacts with RPP13L4/ZAR1. Component of an immune signaling complex made of, at least, SZE1, BKN2/SZE2, ZAR1 and ZED1. Binds directly to SZE1 at the plasma membrane. As to expression, expressed in seedlings, young leaves, floral organs, shoot apical meristems (SAM) and inflorescence stems.

It localises to the cytoplasm. Its subcellular location is the cytosol. The protein resides in the nucleus. The protein localises to the cell membrane. Functionally, together with RPP13L4/ZAR1, involved in the ambient temperature (above 22 degrees Celsius)-sensitive aerial organ development. Together with RPP13L4/ZAR1, involved in the regulation of the ambient temperature-sensitive intersection of growth and immune response in the absence of pathogens, by repressing the transcription of SNC1. Probable non-functional kinase required for recognition of the Pseudomonas syringae type III effector HopZ1a by RPP13L4/ZAR1 and, together with SZE1 and SZE2, to trigger subsequent defense responses. May function as a decoy to trap HopZ1a in the ZAR1 complex for recognition by the plant immune system. In Arabidopsis thaliana (Mouse-ear cress), this protein is Non-functional pseudokinase ZED1.